Reading from the N-terminus, the 263-residue chain is Endonuclease 8 (263 aa).

Catalysis depends on proline 2, which acts as the Schiff-base intermediate with DNA. Glutamate 3 functions as the Proton donor in the catalytic mechanism. The active-site Proton donor; for beta-elimination activity is the lysine 53. The DNA site is built by glutamine 70, arginine 125, and asparagine 169. An FPG-type zinc finger spans residues 229-263 (KLFHRDGEACERCGGIIEKTTLSSRPFYWCPHCQK). The active-site Proton donor; for delta-elimination activity is arginine 253.

This sequence belongs to the FPG family. Zn(2+) serves as cofactor.

The enzyme catalyses 2'-deoxyribonucleotide-(2'-deoxyribose 5'-phosphate)-2'-deoxyribonucleotide-DNA = a 3'-end 2'-deoxyribonucleotide-(2,3-dehydro-2,3-deoxyribose 5'-phosphate)-DNA + a 5'-end 5'-phospho-2'-deoxyribonucleoside-DNA + H(+). Functionally, involved in base excision repair of DNA damaged by oxidation or by mutagenic agents. Acts as a DNA glycosylase that recognizes and removes damaged bases. Has a preference for oxidized pyrimidines, such as thymine glycol, 5,6-dihydrouracil and 5,6-dihydrothymine. Has AP (apurinic/apyrimidinic) lyase activity and introduces nicks in the DNA strand. Cleaves the DNA backbone by beta-delta elimination to generate a single-strand break at the site of the removed base with both 3'- and 5'-phosphates. The polypeptide is Endonuclease 8 (Salmonella typhimurium (strain SL1344)).